The chain runs to 918 residues: Chitin synthase C (918 aa).

The tract at residues 1 to 63 is disordered; it reads MSYNRLGDPY…EMPSSDRLAE (63 aa). Residues 22–37 show a composition bias toward low complexity; sequence NPSSLSNRSPSPGRPL. 4 helical membrane passes run 562 to 581, 605 to 625, 637 to 657, and 672 to 692; these read WLNG…YQLW, LFAW…TTYL, VLGV…FVLS, and MVYL…FVTV. N-linked (GlcNAc...) asparagine glycosylation occurs at asparagine 712. Helical transmembrane passes span 715-735, 845-865, and 890-910; these read FFSI…ASII, VVLV…SSAG, and VVLW…MWFL.

The protein belongs to the chitin synthase family. Class I subfamily. As to expression, mainly expressed in hyphae and conidiphores. Relatively strongly expressed in young cleistothecia and in mature ascospores, but negligible in Huelle cells.

It localises to the cell membrane. The protein localises to the cell septum. Its subcellular location is the cell tip. It catalyses the reaction [(1-&gt;4)-N-acetyl-beta-D-glucosaminyl](n) + UDP-N-acetyl-alpha-D-glucosamine = [(1-&gt;4)-N-acetyl-beta-D-glucosaminyl](n+1) + UDP + H(+). Its function is as follows. Polymerizes chitin, a structural polymer of the cell wall and septum, by transferring the sugar moiety of UDP-GlcNAc to the non-reducing end of the growing chitin polymer. ChsC and chsA share critical functions in hyphal wall integrity and differentiation. ChsA and chsC share also overlapping roles in septum formation. The polypeptide is Chitin synthase C (Emericella nidulans (strain FGSC A4 / ATCC 38163 / CBS 112.46 / NRRL 194 / M139) (Aspergillus nidulans)).